Here is a 92-residue protein sequence, read N- to C-terminus: Large ribosomal subunit protein bL25 (92 aa).

Belongs to the bacterial ribosomal protein bL25 family. Part of the 50S ribosomal subunit; part of the 5S rRNA/L5/L18/L25 subcomplex. Contacts the 5S rRNA. Binds to the 5S rRNA independently of L5 and L18.

Functionally, this is one of the proteins that binds to the 5S RNA in the ribosome where it forms part of the central protuberance. The polypeptide is Large ribosomal subunit protein bL25 (Aliivibrio salmonicida (strain LFI1238) (Vibrio salmonicida (strain LFI1238))).